The sequence spans 77 residues: Serine protease inhibitor 1 (77 aa).

The signal sequence occupies residues methionine 1–alanine 17. 5 disulfide bridges follow: cysteine 21/cysteine 53, cysteine 30/cysteine 48, cysteine 33/cysteine 44, cysteine 37/cysteine 74, and cysteine 55/cysteine 68. Positions cysteine 21–cysteine 74 constitute a TIL domain.

Its subcellular location is the secreted. Its function is as follows. Defends the organism against the host's proteinases. This Anisakis simplex (Herring worm) protein is Serine protease inhibitor 1.